We begin with the raw amino-acid sequence, 540 residues long: Chaperonin GroEL (540 aa).

ATP contacts are provided by residues 29-32 (TLGP), 86-90 (DGTTT), G413, 476-478 (NAA), and D492.

Belongs to the chaperonin (HSP60) family. Forms a cylinder of 14 subunits composed of two heptameric rings stacked back-to-back. Interacts with the co-chaperonin GroES.

The protein localises to the cytoplasm. The enzyme catalyses ATP + H2O + a folded polypeptide = ADP + phosphate + an unfolded polypeptide.. In terms of biological role, together with its co-chaperonin GroES, plays an essential role in assisting protein folding. The GroEL-GroES system forms a nano-cage that allows encapsulation of the non-native substrate proteins and provides a physical environment optimized to promote and accelerate protein folding. This is Chaperonin GroEL from Tsukamurella paurometabola (Corynebacterium paurometabolum).